The following is a 287-amino-acid chain: Ribosomal RNA small subunit methyltransferase A (287 aa).

Asn28, Leu30, Gly55, Glu76, Asp101, and Asn125 together coordinate S-adenosyl-L-methionine.

It belongs to the class I-like SAM-binding methyltransferase superfamily. rRNA adenine N(6)-methyltransferase family. RsmA subfamily.

The protein resides in the cytoplasm. The enzyme catalyses adenosine(1518)/adenosine(1519) in 16S rRNA + 4 S-adenosyl-L-methionine = N(6)-dimethyladenosine(1518)/N(6)-dimethyladenosine(1519) in 16S rRNA + 4 S-adenosyl-L-homocysteine + 4 H(+). Functionally, specifically dimethylates two adjacent adenosines (A1518 and A1519) in the loop of a conserved hairpin near the 3'-end of 16S rRNA in the 30S particle. May play a critical role in biogenesis of 30S subunits. This Alkaliphilus metalliredigens (strain QYMF) protein is Ribosomal RNA small subunit methyltransferase A.